Consider the following 236-residue polypeptide: Uridylate kinase (236 aa).

ATP is bound at residue 10–11 (GS). G44 is a UMP binding site. Positions 45 and 49 each coordinate ATP. Residues D66 and 114 to 120 (ITPGQTT) each bind UMP. ATP-binding residues include T140, Y146, and D149.

The protein belongs to the UMP kinase family. In terms of assembly, homohexamer.

It localises to the cytoplasm. The catalysed reaction is UMP + ATP = UDP + ADP. The protein operates within pyrimidine metabolism; CTP biosynthesis via de novo pathway; UDP from UMP (UMPK route): step 1/1. Its activity is regulated as follows. Inhibited by UTP. Functionally, catalyzes the reversible phosphorylation of UMP to UDP. This is Uridylate kinase from Methanospirillum hungatei JF-1 (strain ATCC 27890 / DSM 864 / NBRC 100397 / JF-1).